The sequence spans 626 residues: MKGPQLDYADLSWSDNGAPISNAYGDIYFSKESGPEETDYVFLTGNRLRERFSNAPPGSLFTIAETGFGSGLNFLMAWALWRECGPADGHLHFTSVEFCPLAREDLVRCHQAWPQLAEFARQLRAQYPAPMQGVHRCRFVDQGVTLTLYLGDVVDWLSDCSFKADAWFLDGFSPKQNPEMWSESLFPLIASHAAQGCTVATFSAAGFIRRGLKEHGFNVSKAPGFGYKRDMTVGVFQAEEPNQPAALPHKEAVVIGSGLSGANVAYALATRGWKVTVLEAADRIAPEASGNPQGALYIKPGVEWSINTRIHANAFLYAERFYSEIANLPTPIWNPCGVLQLAHNDKEAVRQQKFFQHNRYPDEVIRPFTHQEASELAGVSLPASAMYLPGGGWLIPPQLCAHMLQHPNIEVRLNSPVTALERTDEGGWLIHIGSGESAQELECAILILATANNQAMQPAAASALPLKPIRGQVTTLQVESAALPQLNTVLCGEGYLMPPIADRLVTGATFKPNCADAQVTEADNNANLEQLLQLTPALRDELSKHPPTLQGRASVRSALPDYLPAIGPLIPGQGGKGLLIVTAMGSKGLALAPLAGELVADMLEGTPAPIEDSLVQRVLPNRFSQE.

Residues 1 to 237 are tRNA (mnm(5)s(2)U34)-methyltransferase; that stretch reads MKGPQLDYAD…KRDMTVGVFQ (237 aa). Positions 255 to 626 are FAD-dependent cmnm(5)s(2)U34 oxidoreductase; the sequence is IGSGLSGANV…RVLPNRFSQE (372 aa).

The protein in the N-terminal section; belongs to the methyltransferase superfamily. tRNA (mnm(5)s(2)U34)-methyltransferase family. This sequence in the C-terminal section; belongs to the DAO family. Requires FAD as cofactor.

The protein resides in the cytoplasm. The catalysed reaction is 5-aminomethyl-2-thiouridine(34) in tRNA + S-adenosyl-L-methionine = 5-methylaminomethyl-2-thiouridine(34) in tRNA + S-adenosyl-L-homocysteine + H(+). In terms of biological role, catalyzes the last two steps in the biosynthesis of 5-methylaminomethyl-2-thiouridine (mnm(5)s(2)U) at the wobble position (U34) in tRNA. Catalyzes the FAD-dependent demodification of cmnm(5)s(2)U34 to nm(5)s(2)U34, followed by the transfer of a methyl group from S-adenosyl-L-methionine to nm(5)s(2)U34, to form mnm(5)s(2)U34. This chain is tRNA 5-methylaminomethyl-2-thiouridine biosynthesis bifunctional protein MnmC, found in Hahella chejuensis (strain KCTC 2396).